Reading from the N-terminus, the 185-residue chain is Capsid protein (185 aa).

Residues 135–185 form a disordered region; the sequence is PNAPILSTLPETTVVRRRDRGRSPRRRTPSPRRRRSQSPRRRRSQSRESQC. Residues 149-178 are compositionally biased toward basic residues; the sequence is VRRRDRGRSPRRRTPSPRRRRSQSPRRRRS. Phosphoserine; by host is present on residues S157, S164, and S172. Residues 157–163 form a 1; half-length repeat; the sequence is SPRRRTP. Positions 157 to 179 are 3 X 8 AA repeats of S-P-R-R-R-[PR]-S-Q; the sequence is SPRRRTPSPRRRRSQSPRRRRSQ. A Bipartite nuclear localization signal motif is present at residues 160–177; that stretch reads RRTPSPRRRRSQSPRRRR. 2 repeat units span residues 164-171 and 172-179. The segment at 179 to 185 is RNA binding; it reads QSRESQC.

It belongs to the orthohepadnavirus core antigen family. In terms of assembly, homodimerizes, then multimerizes. Interacts with cytosol exposed regions of viral L glycoprotein present in the reticulum-to-Golgi compartment. Interacts with human FLNB. Phosphorylated form interacts with host importin alpha; this interaction depends on the exposure of the NLS, which itself depends upon genome maturation and/or phosphorylation of the capsid protein. Interacts with host NUP153. Post-translationally, phosphorylated by host SRPK1, SRPK2, and maybe protein kinase C or GAPDH. Phosphorylation is critical for pregenomic RNA packaging. Protein kinase C phosphorylation is stimulated by HBx protein and may play a role in transport of the viral genome to the nucleus at the late step during the viral replication cycle.

The protein resides in the virion. It localises to the host cytoplasm. Self assembles to form an icosahedral capsid. Most capsids appear to be large particles with an icosahedral symmetry of T=4 and consist of 240 copies of capsid protein, though a fraction forms smaller T=3 particles consisting of 180 capsid proteins. Entering capsids are transported along microtubules to the nucleus. Phosphorylation of the capsid is thought to induce exposure of nuclear localization signal in the C-terminal portion of the capsid protein that allows binding to the nuclear pore complex via the importin (karyopherin-) alpha and beta. Capsids are imported in intact form through the nuclear pore into the nuclear basket, where it probably binds NUP153. Only capsids that contain the mature viral genome can release the viral DNA and capsid protein into the nucleoplasm. Immature capsids get stuck in the basket. Capsids encapsulate the pre-genomic RNA and the P protein. Pre-genomic RNA is reverse-transcribed into DNA while the capsid is still in the cytoplasm. The capsid can then either be directed to the nucleus, providing more genomes for transcription, or bud through the endoplasmic reticulum to provide new virions. The chain is Capsid protein from Hepatitis B virus genotype A3 (isolate Cameroon/CMR711/1994) (HBV-A).